Reading from the N-terminus, the 742-residue chain is Two pore calcium channel protein 1 (742 aa).

Residues M1–A44 form a disordered region. At M1–S82 the chain is on the cytoplasmic side. Residues F83–L103 form a helical membrane-spanning segment. Residues L104–S140 lie on the Extracellular side of the membrane. Residues L141–Y161 traverse the membrane as a helical segment. Residues E162–K176 lie on the Cytoplasmic side of the membrane. Residues I177–F197 form a helical membrane-spanning segment. The Extracellular segment spans residues R198–R204. The chain crosses the membrane as a helical; Voltage-sensor span at residues V205–I226. The helical transmembrane segment at G227 to A247 threads the bilayer. The Extracellular portion of the chain corresponds to Y248–K258. The segment at residues T259–V273 is an intramembrane region (pore-forming). The Extracellular portion of the chain corresponds to L274 to L296. A helical membrane pass occupies residues F297–I317. The Cytoplasmic portion of the chain corresponds to Y318 to Y446. EF-hand domains are found at residues I335–Y370 and T376–K411. Residues I447 to I467 form a helical membrane-spanning segment. The Extracellular portion of the chain corresponds to E468–E480. The N-linked (GlcNAc...) asparagine glycan is linked to N469. The chain crosses the membrane as a helical span at residues F481 to G501. Over A502–K510 the chain is Cytoplasmic. A helical membrane pass occupies residues F511–S531. At K532–E540 the chain is on the extracellular side. A helical; Voltage-sensor membrane pass occupies residues W541–L558. Residues Q559 to G582 lie on the Cytoplasmic side of the membrane. The helical transmembrane segment at I583 to V603 threads the bilayer. Residues Y604 to D627 are Extracellular-facing. The segment at residues Y628–G642 is an intramembrane region (pore-forming). Residues N643 to Y663 are Extracellular-facing. Residues F664 to L684 form a helical membrane-spanning segment. The Cytoplasmic segment spans residues E685–S742.

It belongs to the calcium channel alpha-1 subunit (TC 1.A.1.11) family. Two pore calcium channel subfamily. As to quaternary structure, homodimer.

The protein localises to the membrane. Inhibited by Al(3+). Its function is as follows. Functions as a voltage-gated inward-rectifying Ca(2+) channel (VDCC) across the plasma membrane that mediates sucrose-induced Ca(2+) influx in autotrophically grown leaf cells. Acts as the major ROS-responsive Ca(2+) channel and is the possible target of Al-dependent inhibition. Plays a regulatory role in defense responses. This is Two pore calcium channel protein 1 (TPC1) from Hordeum vulgare (Barley).